The sequence spans 401 residues: Phosphoglycerate kinase (401 aa).

Substrate contacts are provided by residues aspartate 29–asparagine 31, arginine 45, histidine 69–arginine 72, arginine 125, and arginine 158. Residues lysine 209, glutamate 331, and glycine 357–threonine 360 contribute to the ATP site.

This sequence belongs to the phosphoglycerate kinase family. Monomer.

It is found in the cytoplasm. The catalysed reaction is (2R)-3-phosphoglycerate + ATP = (2R)-3-phospho-glyceroyl phosphate + ADP. Its pathway is carbohydrate degradation; glycolysis; pyruvate from D-glyceraldehyde 3-phosphate: step 2/5. The protein is Phosphoglycerate kinase of Wolinella succinogenes (strain ATCC 29543 / DSM 1740 / CCUG 13145 / JCM 31913 / LMG 7466 / NCTC 11488 / FDC 602W) (Vibrio succinogenes).